A 432-amino-acid chain; its full sequence is Pachytene checkpoint protein 2 homolog (432 aa).

Position 1 is an N-acetylmethionine (Met1). Residue 179–186 participates in ATP binding; sequence GPPGTGKT.

This sequence belongs to the AAA ATPase family. PCH2 subfamily. Specifically interacts with the ligand binding domain of the thyroid receptor (TR). This interaction does not require the presence of thyroid hormone for its interaction. Interacts with proteasome subunit PSMA8; to participate in meiosis progression during spermatogenesis.

Its function is as follows. Plays a key role in chromosome recombination and chromosome structure development during meiosis. Required at early steps in meiotic recombination that leads to non-crossovers pathways. Also needed for efficient completion of homologous synapsis by influencing crossover distribution along the chromosomes affecting both crossovers and non-crossovers pathways. Also required for development of higher-order chromosome structures and is needed for synaptonemal-complex formation. In males, required for efficient synapsis of the sex chromosomes and for sex body formation. Promotes early steps of the DNA double-strand breaks (DSBs) repair process upstream of the assembly of RAD51 complexes. Required for depletion of HORMAD1 and HORMAD2 from synapsed chromosomes. The protein is Pachytene checkpoint protein 2 homolog (TRIP13) of Canis lupus familiaris (Dog).